The following is a 177-amino-acid chain: Inorganic pyrophosphatase (177 aa).

Positions 31, 45, and 57 each coordinate substrate. Mg(2+) contacts are provided by Asp-67, Asp-72, and Asp-104. Residue Tyr-142 coordinates substrate.

It belongs to the PPase family. Homohexamer. Mg(2+) is required as a cofactor.

The protein resides in the cytoplasm. The catalysed reaction is diphosphate + H2O = 2 phosphate + H(+). In terms of biological role, catalyzes the hydrolysis of inorganic pyrophosphate (PPi) forming two phosphate ions. This chain is Inorganic pyrophosphatase, found in Neisseria meningitidis serogroup B (strain ATCC BAA-335 / MC58).